A 296-amino-acid polypeptide reads, in one-letter code: m7GpppN-mRNA hydrolase NUDT17 (296 aa).

A Nudix hydrolase domain is found at 90 to 236 (GRGVDVGVAV…DSGSPCGPLP (147 aa)). The Nudix box motif lies at 129–150 (GHVELGEQLLEAGLRELQEETG). Residues Glu144 and Glu148 each contribute to the Mg(2+) site.

The protein belongs to the Nudix hydrolase family. Mg(2+) serves as cofactor. Requires Mn(2+) as cofactor.

It carries out the reaction a 5'-end (N(7)-methyl 5'-triphosphoguanosine)-ribonucleoside in mRNA + H2O = N(7)-methyl-GDP + a 5'-end phospho-ribonucleoside in mRNA + 2 H(+). Functionally, acts as a decapping enzyme capable of hydrolyzing monomethylated capped RNAs (in vitro). Hydrolyzes monomethylated capped RNA after alpha and beta phosphates to form N(7)-methyl-GDP. Shows low activity towards unmethylated capped RNA. The protein is m7GpppN-mRNA hydrolase NUDT17 (nudt17) of Xenopus laevis (African clawed frog).